The chain runs to 210 residues: Large ribosomal subunit protein uL3 (210 aa).

The tract at residues 119–151 is disordered; that stretch reads FQGAIKRHGQSRGPMSHGSRYHRRPGSMGPVAP.

This sequence belongs to the universal ribosomal protein uL3 family. Part of the 50S ribosomal subunit. Forms a cluster with proteins L14 and L19.

In terms of biological role, one of the primary rRNA binding proteins, it binds directly near the 3'-end of the 23S rRNA, where it nucleates assembly of the 50S subunit. The protein is Large ribosomal subunit protein uL3 of Bacillus cytotoxicus (strain DSM 22905 / CIP 110041 / 391-98 / NVH 391-98).